The primary structure comprises 87 residues: uncharacterized protein (87 aa).

The signal sequence occupies residues 1-26 (MMSTQHFILSLTILIIISNLHDEVNA). 3 cysteine pairs are disulfide-bonded: Cys61/Cys75, Cys68/Cys79, and Cys74/Cys84.

It localises to the secreted. This is an uncharacterized protein from Schistosoma japonicum (Blood fluke).